The sequence spans 528 residues: Galactokinase (528 aa).

Alpha-D-galactose is bound by residues arginine 53, glutamate 59, histidine 60, and aspartate 62. 4 residues coordinate ATP: glycine 165, glycine 167, serine 169, and serine 170. Alpha-D-galactose is bound by residues asparagine 213 and aspartate 217. Residue aspartate 217 is the Proton acceptor of the active site. ATP contacts are provided by serine 264, asparagine 265, and lysine 266. Tyrosine 274 is a binding site for alpha-D-galactose. A Phosphoserine modification is found at serine 381.

Belongs to the GHMP kinase family. GalK subfamily.

It carries out the reaction alpha-D-galactose + ATP = alpha-D-galactose 1-phosphate + ADP + H(+). It functions in the pathway carbohydrate metabolism; galactose metabolism. Galactokinase is a key enzyme in the galactose metabolism where it catalyzes the conversion of alpha-D-galactose to galactose 1-phosphate. Can also induce the transcription of the yeast GAL genes in response to the organism being challenged with galactose as the sole source of carbon. It's striking amino acid sequence similarity to GAL3 might explain its GAL3-like induction activity. In Saccharomyces cerevisiae (strain ATCC 204508 / S288c) (Baker's yeast), this protein is Galactokinase.